The sequence spans 84 residues: U4-theraphotoxin-Hhn1b (84 aa).

The first 22 residues, 1-22 (MKVTLTAILTCAAVLVLHTTAA), serve as a signal peptide directing secretion. A propeptide spanning residues 23 to 47 (EELEESQLMEVGMPDTELAAVDEER) is cleaved from the precursor. Intrachain disulfides connect C51/C65, C55/C76, and C70/C81.

This sequence belongs to the neurotoxin 12 (Hwtx-2) family. 02 (Hwtx-2) subfamily. As to expression, expressed by the venom gland.

The protein localises to the secreted. Functionally, postsynaptic neurotoxin. The sequence is that of U4-theraphotoxin-Hhn1b from Cyriopagopus hainanus (Chinese bird spider).